A 494-amino-acid polypeptide reads, in one-letter code: Protein nucleotidyltransferase YdiU (494 aa).

ATP contacts are provided by Gly-101, Gly-103, Arg-104, Lys-123, Asp-135, Gly-136, Arg-186, and Arg-193. The Proton acceptor role is filled by Asp-262. Mg(2+) is bound by residues Asn-263 and Asp-272. Asp-272 is a binding site for ATP.

The protein belongs to the SELO family. It depends on Mg(2+) as a cofactor. Requires Mn(2+) as cofactor.

The catalysed reaction is L-seryl-[protein] + ATP = 3-O-(5'-adenylyl)-L-seryl-[protein] + diphosphate. It catalyses the reaction L-threonyl-[protein] + ATP = 3-O-(5'-adenylyl)-L-threonyl-[protein] + diphosphate. The enzyme catalyses L-tyrosyl-[protein] + ATP = O-(5'-adenylyl)-L-tyrosyl-[protein] + diphosphate. It carries out the reaction L-histidyl-[protein] + UTP = N(tele)-(5'-uridylyl)-L-histidyl-[protein] + diphosphate. The catalysed reaction is L-seryl-[protein] + UTP = O-(5'-uridylyl)-L-seryl-[protein] + diphosphate. It catalyses the reaction L-tyrosyl-[protein] + UTP = O-(5'-uridylyl)-L-tyrosyl-[protein] + diphosphate. Nucleotidyltransferase involved in the post-translational modification of proteins. It can catalyze the addition of adenosine monophosphate (AMP) or uridine monophosphate (UMP) to a protein, resulting in modifications known as AMPylation and UMPylation. The polypeptide is Protein nucleotidyltransferase YdiU (Chromohalobacter salexigens (strain ATCC BAA-138 / DSM 3043 / CIP 106854 / NCIMB 13768 / 1H11)).